A 221-amino-acid polypeptide reads, in one-letter code: Epididymal secretory glutathione peroxidase (221 aa).

Residues 1–21 (MTAWLGASYVLPILLVSFVQT) form the signal peptide. C73 is a catalytic residue.

The protein belongs to the glutathione peroxidase family. In terms of tissue distribution, epididymis.

Its subcellular location is the secreted. The catalysed reaction is 2 glutathione + H2O2 = glutathione disulfide + 2 H2O. Functionally, protects cells and enzymes from oxidative damage, by catalyzing the reduction of hydrogen peroxide, lipid peroxides and organic hydroperoxide, by glutathione. May constitute a glutathione peroxidase-like protective system against peroxide damage in sperm membrane lipids. In Canis lupus familiaris (Dog), this protein is Epididymal secretory glutathione peroxidase (GPX5).